The sequence spans 231 residues: Ninja-family protein AFP3 (231 aa).

Over residues 83–96 the composition is skewed to basic residues; that stretch reads AKRKRSEKQRKHKA. The interval 83–152 is disordered; sequence AKRKRSEKQR…SAQSQPENLG (70 aa). The segment covering 130 to 152 has biased composition (polar residues); it reads QATTNKSVETSPSSAQSQPENLG.

Belongs to the Ninja family. In terms of assembly, forms a heterodimer with AFP2. Interacts with ABI5/DPBF1, DPBF2, AREB3/DPBF3, EEL/DPBF4, ABF1, ABF3/DPBF5 and ABF4/AREB2.

It is found in the nucleus. Functionally, acts as a negative regulator of abscisic acid (ABA) response and stress responses. This is Ninja-family protein AFP3 (AFP3) from Arabidopsis thaliana (Mouse-ear cress).